The following is a 155-amino-acid chain: 6,7-dimethyl-8-ribityllumazine synthase (155 aa).

5-amino-6-(D-ribitylamino)uracil is bound by residues F26, 60–62 (ALE), and 84–86 (AVI). 89–90 (ET) is a binding site for (2S)-2-hydroxy-3-oxobutyl phosphate. The active-site Proton donor is the H92. N117 is a binding site for 5-amino-6-(D-ribitylamino)uracil. R131 contributes to the (2S)-2-hydroxy-3-oxobutyl phosphate binding site.

This sequence belongs to the DMRL synthase family.

It carries out the reaction (2S)-2-hydroxy-3-oxobutyl phosphate + 5-amino-6-(D-ribitylamino)uracil = 6,7-dimethyl-8-(1-D-ribityl)lumazine + phosphate + 2 H2O + H(+). It participates in cofactor biosynthesis; riboflavin biosynthesis; riboflavin from 2-hydroxy-3-oxobutyl phosphate and 5-amino-6-(D-ribitylamino)uracil: step 1/2. Its function is as follows. Catalyzes the formation of 6,7-dimethyl-8-ribityllumazine by condensation of 5-amino-6-(D-ribitylamino)uracil with 3,4-dihydroxy-2-butanone 4-phosphate. This is the penultimate step in the biosynthesis of riboflavin. The chain is 6,7-dimethyl-8-ribityllumazine synthase from Chromobacterium violaceum (strain ATCC 12472 / DSM 30191 / JCM 1249 / CCUG 213 / NBRC 12614 / NCIMB 9131 / NCTC 9757 / MK).